Here is a 776-residue protein sequence, read N- to C-terminus: Kinesin-like protein KIN-8A (776 aa).

2 disordered regions span residues 1-31 (MPVS…RGGA) and 80-135 (VGEV…KSSH). Positions 7–26 (ASAAGGQPWSSAAPAPASAP) are enriched in low complexity. A compositionally biased stretch (pro residues) spans 123-132 (PPPPPAPPPK). The region spanning 205–534 (RIMVFVRLRP…LHWADRAKEI (330 aa)) is the Kinesin motor domain. ATP is bound at residue 297-304 (GATGAGKT). A coiled-coil region spans residues 554–592 (TDQAKLVLELQKENSELRQQLARQQQKLLTVQAQTLASN). Residues 590-611 (ASNASPQQSPAPSAQISTPCST) are disordered. The segment covering 593–604 (ASPQQSPAPSAQ) has biased composition (low complexity). The stretch at 634–671 (AAENAQVRDLQRKVKAMEAEIEKMKKEHLLQLKQKDEF) forms a coiled coil.

Belongs to the TRAFAC class myosin-kinesin ATPase superfamily. Kinesin family. KIN-8 subfamily.

The protein is Kinesin-like protein KIN-8A of Oryza sativa subsp. japonica (Rice).